The following is a 550-amino-acid chain: MMFCVQCEQTIRTPAGNGCAYAQGMCGKTAETSDLQDVLIYALQDLSAWVLAAREHGVIDNEIDAFVPKAFFATLTNVNFDSARIVAYVNQALAHRQQLVDRLAALAVQVTGLPEATGFEPGDELLAQLAHASQTAVNRGKSEVHEDIMGLRLLCLYGLKGAAAYMEHARVLGQQDSEVAAEFHRIMSWLSTDPSELDSLFKCAMEIGLLNFRVMEMLDLGETTAFGHPEPTQVRVTPVPGKCILVSGHDMVDLKLILEQTAGTGIHVYTHGEMLPALAYPFFKQYPHLVGNYGSAWQNQQKEFANFPGAVVMTSNCIIDPNVGDYSDRIFTRSIVGWPGVTHLEGDDFSAVVAKALSLDGFKHTELEHFITIGFARNALMQAAPAVIEKVKAGEISHFFLVGGCDGDKAERAYFTEFAKAAPKDSLLLTLGCGKYKFNKLDFGNIGGIPRLLDVGQCNDAYSAIQLALALSEAFECGVNDLPLTLVLSWFEQKAIVILLTLLALGVKDIRTGPTAPAFLTPALLKVLEEQFGLKGTTTAEADLAEILAA.

[2Fe-2S] cluster contacts are provided by C4, C7, C19, and C26. Positions 249, 273, 317, 405, 433, 458, 492, and 494 each coordinate hybrid [4Fe-2O-2S] cluster. C405 is subject to Cysteine persulfide.

Belongs to the HCP family. The cofactor is [2Fe-2S] cluster. Hybrid [4Fe-2O-2S] cluster serves as cofactor.

The protein localises to the cytoplasm. It catalyses the reaction A + NH4(+) + H2O = hydroxylamine + AH2 + H(+). In terms of biological role, catalyzes the reduction of hydroxylamine to form NH(3) and H(2)O. The chain is Hydroxylamine reductase from Aeromonas salmonicida (strain A449).